A 1244-amino-acid polypeptide reads, in one-letter code: Putative late blight resistance protein homolog R1A-4 (1244 aa).

2 coiled-coil regions span residues 411 to 434 (RYSD…ESLQ) and 526 to 548 (PRMN…QLLN). The NB-ARC domain occupies 527-755 (RMNEEIVGFK…ECWEQVANDL (229 aa)). ATP is bound at residue 560–567 (GMPGLGKT). LRR repeat units follow at residues 978–1004 (LWNL…VWDM), 1079–1103 (PIRL…ISAP), 1127–1150 (LKNL…KVSN), 1153–1178 (FPQL…AFPN), and 1213–1237 (ESVV…NFKL).

Belongs to the disease resistance NB-LRR family.

The protein localises to the cytoplasm. The protein resides in the membrane. Confers resistance to late blight (Phytophthora infestans) races carrying the avirulence gene Avr1. Resistance proteins guard the plant against pathogens that contain an appropriate avirulence protein via an indirect interaction with this avirulence protein. That triggers a defense system including the hypersensitive response, which restricts the pathogen growth. In Solanum demissum (Wild potato), this protein is Putative late blight resistance protein homolog R1A-4 (R1A-4).